Consider the following 515-residue polypeptide: Anthranilate synthase component 1 (515 aa).

L-tryptophan is bound by residues Ser-50 and 281-283 (PYM). 316-317 (GT) contributes to the chorismate binding site. Glu-343 serves as a coordination point for Mg(2+). Residues Tyr-431, Arg-451, 465–467 (GAG), and Gly-467 each bind chorismate. Position 480 (Glu-480) interacts with Mg(2+).

The protein belongs to the anthranilate synthase component I family. In terms of assembly, heterotetramer consisting of two non-identical subunits: a beta subunit (TrpG) and a large alpha subunit (TrpE). Requires Mg(2+) as cofactor.

The enzyme catalyses chorismate + L-glutamine = anthranilate + pyruvate + L-glutamate + H(+). The protein operates within amino-acid biosynthesis; L-tryptophan biosynthesis; L-tryptophan from chorismate: step 1/5. Its activity is regulated as follows. Feedback inhibited by tryptophan. Its function is as follows. Part of a heterotetrameric complex that catalyzes the two-step biosynthesis of anthranilate, an intermediate in the biosynthesis of L-tryptophan. In the first step, the glutamine-binding beta subunit (TrpG) of anthranilate synthase (AS) provides the glutamine amidotransferase activity which generates ammonia as a substrate that, along with chorismate, is used in the second step, catalyzed by the large alpha subunit of AS (TrpE) to produce anthranilate. In the absence of TrpG, TrpE can synthesize anthranilate directly from chorismate and high concentrations of ammonia. The polypeptide is Anthranilate synthase component 1 (trpE) (Bacillus subtilis (strain 168)).